The primary structure comprises 301 residues: Enolase-phosphatase E1 (301 aa).

Mg(2+)-binding residues include Asp-22 and Glu-24. Substrate-binding positions include Ser-163–Ser-164 and Lys-197. Mg(2+) is bound at residue Asp-222. The segment at Ala-273 to Phe-301 is disordered.

This sequence belongs to the HAD-like hydrolase superfamily. MasA/MtnC family. Monomer. Mg(2+) is required as a cofactor.

Its subcellular location is the cytoplasm. The protein localises to the nucleus. The catalysed reaction is 5-methylsulfanyl-2,3-dioxopentyl phosphate + H2O = 1,2-dihydroxy-5-(methylsulfanyl)pent-1-en-3-one + phosphate. It functions in the pathway amino-acid biosynthesis; L-methionine biosynthesis via salvage pathway; L-methionine from S-methyl-5-thio-alpha-D-ribose 1-phosphate: step 3/6. Its pathway is amino-acid biosynthesis; L-methionine biosynthesis via salvage pathway; L-methionine from S-methyl-5-thio-alpha-D-ribose 1-phosphate: step 4/6. Bifunctional enzyme that catalyzes the enolization of 2,3-diketo-5-methylthiopentyl-1-phosphate (DK-MTP-1-P) into the intermediate 2-hydroxy-3-keto-5-methylthiopentenyl-1-phosphate (HK-MTPenyl-1-P), which is then dephosphorylated to form the acireductone 1,2-dihydroxy-3-keto-5-methylthiopentene (DHK-MTPene). In Monosiga brevicollis (Choanoflagellate), this protein is Enolase-phosphatase E1.